We begin with the raw amino-acid sequence, 182 residues long: T-cell surface glycoprotein CD3 gamma chain (182 aa).

The first 22 residues, 1-22 (MEQGKGLAGLFLVISLLQGTMA), serve as a signal peptide directing secretion. Over 23 to 116 (QQKEEKHLVK…CIELNMGTVS (94 aa)) the chain is Extracellular. The Ig-like domain maps to 37–94 (QGDGSVLLTCDFNEKTITWLKDGHRISPPNATKSTWNLGNGAKDPRGMYQCRGAKKKS). Cysteines 46 and 87 form a disulfide. N-linked (GlcNAc...) asparagine glycosylation occurs at N66. A helical membrane pass occupies residues 117-137 (GFIFAEIISIFFLAVGVYFIA). Topologically, residues 138–182 (GQDGVRQSRASDKQTLLQNEQVYQPLKDREYEQYSRLQGNQVRKK) are cytoplasmic. S145 is subject to Phosphoserine. The residue at position 148 (S148) is a Phosphoserine; by PKC. The ITAM domain maps to 149-177 (DKQTLLQNEQVYQPLKDREYEQYSRLQGN). The Di-leucine motif motif lies at 153 to 154 (LL).

As to quaternary structure, the TCR-CD3 complex is composed of a CD3D/CD3E and a CD3G/CD3E heterodimers that preferentially associate with TCRalpha and TCRbeta, respectively, to form TCRalpha/CD3E/CD3G and TCRbeta/CD3G/CD3E trimers. In turn, the hexamer interacts with CD3Z homodimer to form the TCR-CD3 complex. Alternatively, TCRalpha and TCRbeta can be replaced by TCRgamma and TCRdelta. Post-translationally, phosphorylated on Tyr residues after T-cell receptor triggering by LCK in association with CD4/CD8. Phosphorylated also by PKC; leading to the TCR complex down-regulation. Phosphorylated on Tyr residues after T-cell receptor triggering by LCK in association with CD4/CD8.

It localises to the cell membrane. In terms of biological role, part of the TCR-CD3 complex present on T-lymphocyte cell surface that plays an essential role in adaptive immune response. When antigen presenting cells (APCs) activate T-cell receptor (TCR), TCR-mediated signals are transmitted across the cell membrane by the CD3 chains CD3D, CD3E, CD3G and CD3Z. All CD3 chains contain immunoreceptor tyrosine-based activation motifs (ITAMs) in their cytoplasmic domain. Upon TCR engagement, these motifs become phosphorylated by Src family protein tyrosine kinases LCK and FYN, resulting in the activation of downstream signaling pathways. In addition to this role of signal transduction in T-cell activation, CD3G plays an essential role in the dynamic regulation of TCR expression at the cell surface. Indeed, constitutive TCR cycling is dependent on the di-leucine-based (diL) receptor-sorting motif present in CD3G. The polypeptide is T-cell surface glycoprotein CD3 gamma chain (Cd3g) (Rattus norvegicus (Rat)).